A 323-amino-acid polypeptide reads, in one-letter code: Lipoyl synthase (323 aa).

[4Fe-4S] cluster-binding residues include cysteine 65, cysteine 70, cysteine 76, cysteine 91, cysteine 95, cysteine 98, and serine 304. The region spanning phenylalanine 77 to threonine 293 is the Radical SAM core domain.

The protein belongs to the radical SAM superfamily. Lipoyl synthase family. [4Fe-4S] cluster is required as a cofactor.

Its subcellular location is the cytoplasm. The catalysed reaction is [[Fe-S] cluster scaffold protein carrying a second [4Fe-4S](2+) cluster] + N(6)-octanoyl-L-lysyl-[protein] + 2 oxidized [2Fe-2S]-[ferredoxin] + 2 S-adenosyl-L-methionine + 4 H(+) = [[Fe-S] cluster scaffold protein] + N(6)-[(R)-dihydrolipoyl]-L-lysyl-[protein] + 4 Fe(3+) + 2 hydrogen sulfide + 2 5'-deoxyadenosine + 2 L-methionine + 2 reduced [2Fe-2S]-[ferredoxin]. It participates in protein modification; protein lipoylation via endogenous pathway; protein N(6)-(lipoyl)lysine from octanoyl-[acyl-carrier-protein]: step 2/2. Its function is as follows. Catalyzes the radical-mediated insertion of two sulfur atoms into the C-6 and C-8 positions of the octanoyl moiety bound to the lipoyl domains of lipoate-dependent enzymes, thereby converting the octanoylated domains into lipoylated derivatives. The sequence is that of Lipoyl synthase from Buchnera aphidicola subsp. Acyrthosiphon pisum (strain 5A).